Reading from the N-terminus, the 195-residue chain is UPF0215 protein TK2033 (195 aa).

It belongs to the UPF0215 family.

The protein is UPF0215 protein TK2033 of Thermococcus kodakarensis (strain ATCC BAA-918 / JCM 12380 / KOD1) (Pyrococcus kodakaraensis (strain KOD1)).